The primary structure comprises 446 residues: Probable glycine dehydrogenase (decarboxylating) subunit 1 (446 aa).

Belongs to the GcvP family. N-terminal subunit subfamily. As to quaternary structure, the glycine cleavage system is composed of four proteins: P, T, L and H. In this organism, the P 'protein' is a heterodimer of two subunits.

The catalysed reaction is N(6)-[(R)-lipoyl]-L-lysyl-[glycine-cleavage complex H protein] + glycine + H(+) = N(6)-[(R)-S(8)-aminomethyldihydrolipoyl]-L-lysyl-[glycine-cleavage complex H protein] + CO2. Functionally, the glycine cleavage system catalyzes the degradation of glycine. The P protein binds the alpha-amino group of glycine through its pyridoxal phosphate cofactor; CO(2) is released and the remaining methylamine moiety is then transferred to the lipoamide cofactor of the H protein. This Desulfitobacterium hafniense (strain DSM 10664 / DCB-2) protein is Probable glycine dehydrogenase (decarboxylating) subunit 1.